Here is a 448-residue protein sequence, read N- to C-terminus: Probable sodium-coupled neutral amino acid transporter 6 (448 aa).

Polar residues-rich tracts occupy residues 1-12 and 26-36; these read MQASDSSINTLD and LLANSPQRRSS. The disordered stretch occupies residues 1-36; sequence MQASDSSINTLDGHQVSAGRDESTPLLANSPQRRSS. Transmembrane regions (helical) follow at residues 40-60, 69-89, 117-137, 164-184, and 185-205; these read SFGFAVFNLMNAIMGSGILGL, ILGFSALLLIVALLAAYSIHL, LVACTILIQNVGAMSSYLFII, LLIITSVCIVLPLALLPKIGF, and LGYTSSLSFFFMVYFAVVIVI. Residues C212 and C232 are joined by a disulfide bond. N-linked (GlcNAc...) asparagine glycans are attached at residues N218 and N228. 6 helical membrane passes run 244–264, 281–301, 321–341, 365–385, 388–408, and 425–445; these read AFALPTMAFSFLCHTSVLPIY, VGIALSFLIYYISALFGYLTF, VLIITVRLCILLAVLLTVPLI, ILVTLVLNIIIVLLAIYVPDM, VFGVVGSTTSTCLLFVFPGLF, and ACGLLVLGICIGACSLTLIIM.

It belongs to the amino acid/polyamine transporter 2 family.

It localises to the cell membrane. Functionally, probable sodium-dependent amino acid/proton antiporter, could be a neuronal transporter for glutamate. The sequence is that of Probable sodium-coupled neutral amino acid transporter 6 (slc38a6) from Xenopus tropicalis (Western clawed frog).